The sequence spans 440 residues: Xylose isomerase (440 aa).

Residues His101 and Asp104 contribute to the active site. Mg(2+) is bound by residues Glu232, Glu268, His271, Asp296, Asp307, Asp309, and Asp339.

It belongs to the xylose isomerase family. As to quaternary structure, homotetramer. Mg(2+) is required as a cofactor.

The protein resides in the cytoplasm. The catalysed reaction is alpha-D-xylose = alpha-D-xylulofuranose. This chain is Xylose isomerase, found in Salmonella agona (strain SL483).